The sequence spans 547 residues: MHAMTFKAILLLGLLALVSTSASIAFAKEVRATITEVPPFNRNSFPSDFIFGTAASSYQYEGEGRVPSIWDNFTHQYPEKIADGSNGDVAVDQFHHYKEDVAIMKYMNLDAYRLSISWPRILPTGRASGGINSTGVDYYNRLINELLANDITPFVTIFHWDLPQALEDEYGGFLNHTIVNDFRDYADLCFNLFGDRVKHWITVNEPSIFTMNGYAYGIFAPGRCSPSYNPTCTGGDAGTEPDLVAHNLILSHAATVQVYKKKYQEHQNGIIGISLQIIWAVPLSNSTSDQKAAQRYLDFTGGWFLDPLTAGQYPESMQYLVGDRLPKFTTDEAKLVKGSFDFVGINYYTSSYLTSSDASTCCPPSYLTDSQVTFSSQRNGVFIGPVTPSGWMCIYPKGLRDLLLYIKEKYNNPLVYITENGMDELDDPSQSLEESLIDTYRIDSYYRHLFYVRSAIGSGANVKGFFAWSLLDNFEWNEGFTSRFGLNFVNYTTLTRYHKLSATWFKYFLARDQEIAKLDISAPKARWSSSTMIKEEKRKPKWAIQAF.

An N-terminal signal peptide occupies residues 1–31 (MHAMTFKAILLLGLLALVSTSASIAFAKEVR). Residue Gln59 participates in a beta-D-glucoside binding. Asn72 and Asn132 each carry an N-linked (GlcNAc...) asparagine glycan. His159 contacts a beta-D-glucoside. A glycan (N-linked (GlcNAc...) asparagine) is linked at Asn175. 204-205 (NE) lines the a beta-D-glucoside pocket. Glu205 acts as the Proton donor in catalysis. A disulfide bridge links Cys224 with Cys232. Residue Asn285 is glycosylated (N-linked (GlcNAc...) asparagine). A beta-D-glucoside contacts are provided by residues Tyr348, Glu419, Trp468, 475 to 476 (EW), and Phe484. Glu419 acts as the Nucleophile in catalysis. Residue Asn490 is glycosylated (N-linked (GlcNAc...) asparagine).

The protein belongs to the glycosyl hydrolase 1 family. As to quaternary structure, homotetramer.

It carries out the reaction 7-[beta-D-apiofuranosyl-(1-&gt;6)-beta-D-glucopyranosyloxy]isoflavonoid + H2O = a 7-hydroxyisoflavonoid + beta-D-apiofuranosyl-(1-&gt;6)-D-glucose.. Not inhibited by iron, calcium, mercury, manganese, zinc or EDTA. Hydrolyzes dalpatein 7-O-beta-D-apiofuranosyl-(1-&gt;6)-beta-D-glucopyranoside and dalnigrein 7-O-beta-D-apiofuranosyl-(1-&gt;6)-beta-D-glucopyranoside. Also has activity towards pNP-beta-D-fucoside and pNP-beta-D-glucoside, but not pNP-beta-cellobioside. In Dalbergia nigrescens (Thai blackwood), this protein is Isoflavonoid 7-O-beta-apiosyl-glucoside beta-glycosidase.